The primary structure comprises 690 residues: Protein-glucosylgalactosylhydroxylysine glucosidase (690 aa).

299 to 300 (WD) lines the substrate pocket. Glu429 functions as the Proton donor in the catalytic mechanism. Position 497–498 (497–498 (KQ)) interacts with substrate.

It belongs to the glycosyl hydrolase 65 family.

It carries out the reaction (5R)-5-O-[alpha-D-glucosyl-(1-&gt;2)-beta-D-galactosyl]-5-hydroxy-L-lysyl-[collagen] + H2O = (5R)-5-O-(beta-D-galactosyl)-5-hydroxy-L-lysyl-[collagen] + D-glucose. Functionally, catalyzes the hydrolysis of glucose from the disaccharide unit linked to hydroxylysine residues of collagen and collagen-like proteins. This Mus musculus (Mouse) protein is Protein-glucosylgalactosylhydroxylysine glucosidase.